A 1020-amino-acid chain; its full sequence is LLGL scribble cell polarity complex component 2 (1020 aa).

WD repeat units follow at residues 36 to 69, 76 to 117, 132 to 169, 193 to 227, 233 to 264, 282 to 324, 332 to 364, 386 to 462, 506 to 581, 590 to 651, 710 to 766, 775 to 827, 832 to 884, and 898 to 921; these read SALG…FMGL, VTQV…IGRF, VTAV…ENNI, TLHE…VQHF, LESV…GEDP, AISK…KTHE, IIDF…VVDL, TCSH…YKLS, QKIH…FALV, TAIA…LRQS, VRTL…KEIQ, GLVV…VSSK, LTAV…VHYP, and VFTK…SLST. The interval 935 to 968 is disordered; that stretch reads LQMRSKSPSSPVHRDLPDGVPTEHRNFKGDSEGY. The segment covering 946–965 has biased composition (basic and acidic residues); the sequence is VHRDLPDGVPTEHRNFKGDS.

Belongs to the WD repeat L(2)GL family. Phosphorylated.

It localises to the cytoplasm. Its subcellular location is the cytoskeleton. Its function is as follows. Essential for hemidesmosome formation and maintenance of the cytoskeleton elements as well as cellular morphology in the basal epidermis during development. Also involved in regulating growth of the basal epidermis. This chain is LLGL scribble cell polarity complex component 2 (llgl2), found in Danio rerio (Zebrafish).